The sequence spans 466 residues: Triplex capsid protein 1 (466 aa).

The disordered stretch occupies residues 1-29 (MKTKPLPTAPMAWAESAVETTTSPRELAG).

This sequence belongs to the herpesviridae TRX1 protein family. As to quaternary structure, interacts with TRX2, MCP and capsid vertex component 2/CVC2.

It localises to the virion. Its subcellular location is the host nucleus. Its function is as follows. Structural component of the T=16 icosahedral capsid. The capsid is composed of pentamers and hexamers of major capsid protein/MCP, which are linked together by heterotrimers called triplexes. These triplexes are formed by a single molecule of triplex protein 1/TRX1 and two copies of triplex protein 2/TRX2. Additionally, TRX1 is required for efficient transport of TRX2 to the nucleus, which is the site of capsid assembly. This Homo sapiens (Human) protein is Triplex capsid protein 1.